A 312-amino-acid chain; its full sequence is Acetyl-coenzyme A carboxylase carboxyl transferase subunit alpha (312 aa).

The CoA carboxyltransferase C-terminal domain occupies 36–286 (RLEKEVKSIY…KEYFLDALRT (251 aa)).

The protein belongs to the AccA family. As to quaternary structure, acetyl-CoA carboxylase is a heterohexamer composed of biotin carboxyl carrier protein (AccB), biotin carboxylase (AccC) and two subunits each of ACCase subunit alpha (AccA) and ACCase subunit beta (AccD).

Its subcellular location is the cytoplasm. It carries out the reaction N(6)-carboxybiotinyl-L-lysyl-[protein] + acetyl-CoA = N(6)-biotinyl-L-lysyl-[protein] + malonyl-CoA. It functions in the pathway lipid metabolism; malonyl-CoA biosynthesis; malonyl-CoA from acetyl-CoA: step 1/1. Functionally, component of the acetyl coenzyme A carboxylase (ACC) complex. First, biotin carboxylase catalyzes the carboxylation of biotin on its carrier protein (BCCP) and then the CO(2) group is transferred by the carboxyltransferase to acetyl-CoA to form malonyl-CoA. The sequence is that of Acetyl-coenzyme A carboxylase carboxyl transferase subunit alpha from Helicobacter pylori (strain P12).